We begin with the raw amino-acid sequence, 397 residues long: tRNA-specific 2-thiouridylase MnmA (397 aa).

ATP contacts are provided by residues 6–13 (AMSGGVDS) and Leu-32. The active-site Nucleophile is the Cys-101. Cys-101 and Cys-199 form a disulfide bridge. Position 125 (Gly-125) interacts with ATP. Residues 148 to 150 (KDQ) form an interaction with tRNA region. The Cysteine persulfide intermediate role is filled by Cys-199.

Belongs to the MnmA/TRMU family.

It localises to the cytoplasm. It catalyses the reaction S-sulfanyl-L-cysteinyl-[protein] + uridine(34) in tRNA + AH2 + ATP = 2-thiouridine(34) in tRNA + L-cysteinyl-[protein] + A + AMP + diphosphate + H(+). Its function is as follows. Catalyzes the 2-thiolation of uridine at the wobble position (U34) of tRNA, leading to the formation of s(2)U34. This chain is tRNA-specific 2-thiouridylase MnmA, found in Clavibacter sepedonicus (Clavibacter michiganensis subsp. sepedonicus).